A 150-amino-acid chain; its full sequence is Geranyl diphosphate phosphohydrolase (150 aa).

Residues Ser14–Pro147 form the Nudix hydrolase domain. The short motif at Gly48 to Asp69 is the Nudix box element. 2 residues coordinate Mg(2+): Glu63 and Glu67.

This sequence belongs to the Nudix hydrolase family. In terms of tissue distribution, expressed in petals. Little or no expression in stamens, sepals or young leaves.

The protein resides in the cytoplasm. It catalyses the reaction (2E)-geranyl diphosphate + H2O = (2E)-geranyl phosphate + phosphate + H(+). Functionally, involved in a cytosolic pathway for the biosynthesis of free monoterpene alcohols that contribute to fragrance. Lacks terpene synthase activity, but has a diphosphohydrolase activity with geranyl diphosphate and farnesyl diphosphate as substrates. No activity with 8-oxo-dGTP and dGTP and unable to dephosphorylate geranyl phosphate to geraniol. The chain is Geranyl diphosphate phosphohydrolase from Rosa hybrid cultivar.